The primary structure comprises 230 residues: Cytochrome b6-f complex iron-sulfur subunit, chloroplastic (230 aa).

The span at 1–16 shows a compositional bias: low complexity; it reads MASTTLSATPTPSQLS. The disordered stretch occupies residues 1–20; it reads MASTTLSATPTPSQLSAAKN. The N-terminal 56 residues, 1–56, are a transit peptide targeting the chloroplast; the sequence is MASTTLSATPTPSQLSAAKNGAYSPSRALLGKTARGLYPEKEMVSRKVTCQATSIP. The chain crosses the membrane as a helical span at residues 73–93; the sequence is LLGALSLPTAGMLIPYGAFFV. The region spanning 116-212 is the Rieske domain; the sequence is AAAWLKTHGP…CDISEEGKVV (97 aa). The [2Fe-2S] cluster site is built by Cys-158, His-160, Cys-176, and His-179. Cys-163 and Cys-178 are oxidised to a cystine.

It belongs to the Rieske iron-sulfur protein family. The 4 large subunits of the cytochrome b6-f complex are cytochrome b6, subunit IV (17 kDa polypeptide, petD), cytochrome f and the Rieske protein, while the 4 small subunits are petG, petL, petM and petN. The complex functions as a dimer. [2Fe-2S] cluster is required as a cofactor.

It is found in the plastid. The protein localises to the chloroplast thylakoid membrane. It catalyses the reaction 2 oxidized [plastocyanin] + a plastoquinol + 2 H(+)(in) = 2 reduced [plastocyanin] + a plastoquinone + 4 H(+)(out). Component of the cytochrome b6-f complex, which mediates electron transfer between photosystem II (PSII) and photosystem I (PSI), cyclic electron flow around PSI, and state transitions. This is Cytochrome b6-f complex iron-sulfur subunit, chloroplastic (petC) from Fritillaria agrestis (Stinkbells).